We begin with the raw amino-acid sequence, 1780 residues long: Callose synthase 12 (1780 aa).

Topologically, residues 1–302 (MSLRHRTVPP…ERRTFFYLYR (302 aa)) are cytoplasmic. Residues 303–323 (SFDRLWVMLALFLQAAIIVAW) form a helical membrane-spanning segment. The Extracellular segment spans residues 324 to 348 (EEKPDTSSVTRQLWNALKARDVQVR). The helical transmembrane segment at 349 to 369 (LLTVFLTWSGMRLLQAVLDAA) threads the bilayer. At 370-386 (SQYPLVSRETKRHFFRM) the chain is on the cytoplasmic side. A helical membrane pass occupies residues 387-407 (LMKVIAAAVWIVAFTVLYTNI). Residues 408–427 (WKQKRQDRQWSNAATTKIYQ) lie on the Extracellular side of the membrane. The helical transmembrane segment at 428-448 (FLYAVGAFLVPEILALALFII) threads the bilayer. Topologically, residues 449–489 (PWMRNFLEETNWKIFFALTWWFQGKSFVGRGLREGLVDNIK) are cytoplasmic. The chain crosses the membrane as a helical span at residues 490-510 (YSTFWIFVLATKFTFSYFLQV). Topologically, residues 511-542 (KPMIKPSKLLWNLKDVDYEWHQFYGDSNRFSV) are extracellular. Residues 543–563 (ALLWLPVVLIYLMDIQIWYAI) form a helical membrane-spanning segment. Residues 564 to 1348 (YSSIVGAVVG…FFRMLSFFYT (785 aa)) are Cytoplasmic-facing. Residues 1349–1369 (TVGFFFNTMMVILTVYAFLWG) form a helical membrane-spanning segment. Residues 1370–1394 (RVYLALSGVEKSALADSTDTNAALG) lie on the Extracellular side of the membrane. A helical membrane pass occupies residues 1395-1415 (VILNQQFIIQLGLFTALPMIV). Residues 1416–1421 (EWSLEE) lie on the Cytoplasmic side of the membrane. The chain crosses the membrane as a helical span at residues 1422–1442 (GFLLAIWNFIRMQIQLSAVFY). The Extracellular segment spans residues 1443–1489 (TFSMGTRAHYFGRTILHGGAKYRATGRGFVVEHKGFTENYRLYARSH). Residues 1490–1510 (FVKAIELGLILIVYASHSPIA) traverse the membrane as a helical segment. The Cytoplasmic segment spans residues 1511–1516 (KDSLIY). A helical transmembrane segment spans residues 1517 to 1537 (IAMTITSWFLVISWIMAPFVF). The Extracellular segment spans residues 1538–1588 (NPSGFDWLKTVYDFEDFMNWIWYQGRISTKSEQSWEKWWYEEQDHLRNTGK). The helical transmembrane segment at 1589–1609 (AGLFVEIILVLRFFFFQYGIV) threads the bilayer. Topologically, residues 1610–1620 (YQLKIANGSTS) are cytoplasmic. The helical transmembrane segment at 1621–1641 (LFVYLFSWIYIFAIFVLFLVI) threads the bilayer. Residues 1642-1657 (QYARDKYSAKAHIRYR) lie on the Extracellular side of the membrane. Residues 1658–1678 (LVQFLLIVLAILVIVALLEFT) traverse the membrane as a helical segment. The Cytoplasmic segment spans residues 1679 to 1681 (HFS). A helical transmembrane segment spans residues 1682–1702 (FIDIFTSLLAFIPTGWGILLI). Residues 1703-1728 (AQTQRKWLKNYTIFWNAVVSVARMYD) are Extracellular-facing. The N-linked (GlcNAc...) asparagine glycan is linked to Asn-1712. Residues 1729 to 1749 (ILFGILIMVPVAFLSWMPGFQ) form a helical membrane-spanning segment. Topologically, residues 1750 to 1780 (SMQTRILFNEAFSRGLRIMQIVTGKKSKGDV) are cytoplasmic.

Belongs to the glycosyltransferase 48 family. Highly expressed in flowers. Expressed at low levels in roots, leaves, stems, cauline leaves and siliques.

Its subcellular location is the cell membrane. It carries out the reaction [(1-&gt;3)-beta-D-glucosyl](n) + UDP-alpha-D-glucose = [(1-&gt;3)-beta-D-glucosyl](n+1) + UDP + H(+). In terms of biological role, involved in sporophytic and gametophytic development. Required for normal leaf development. During pollen formation, required for the formation of the callose wall separating the tetraspores of the tetrad (interstitial wall), but not for the callose wall surrounding the pollen mother cells (peripheral wall). Functionally redudant to CALS11 (GSL1). May play a role later in pollen grain maturation. Required for callose formation induced by wounding and pathogen attack. May interfere with salicylic acid-induced signaling pathway during defense response. During plant growth and development, callose is found as a transitory component of the cell plate in dividing cells, is a major component of pollen mother cell walls and pollen tubes, and is found as a structural component of plasmodesmatal canals. The protein is Callose synthase 12 (CALS12) of Arabidopsis thaliana (Mouse-ear cress).